Here is a 201-residue protein sequence, read N- to C-terminus: MAVAIEAPFHVLAVDDSLPDRKLIERLLKTSSFQVTTVDSGSKALEFLGLHDHEDSPISTQSDQQEVAVNLIITDYCMPGMTGYDLLKKIKESSYLRDIPVVIMSSDNIPSRINRCLEEGADEFFLKPVRLSDMSKLKPHILKSRCKEHYQQEQNLQSNSESNNSSNPTSENSSSSTSSNSHKRKAVDEEILPHTIRPRHS.

One can recognise a Response regulatory domain in the interval 10–142 (HVLAVDDSLP…DMSKLKPHIL (133 aa)). The residue at position 75 (Asp-75) is a 4-aspartylphosphate. The tract at residues 149–201 (HYQQEQNLQSNSESNNSSNPTSENSSSSTSSNSHKRKAVDEEILPHTIRPRHS) is disordered. Over residues 158–180 (SNSESNNSSNPTSENSSSSTSSN) the composition is skewed to low complexity.

Belongs to the ARR family. Type-A subfamily. In terms of processing, two-component system major event consists of a His-to-Asp phosphorelay between a sensor histidine kinase (HK) and a response regulator (RR). In plants, the His-to-Asp phosphorelay involves an additional intermediate named Histidine-containing phosphotransfer protein (HPt). This multistep phosphorelay consists of a His-Asp-His-Asp sequential transfer of a phosphate group between first a His and an Asp of the HK protein, followed by the transfer to a conserved His of the HPt protein and finally the transfer to an Asp in the receiver domain of the RR protein.

Functionally, functions as a response regulator involved in His-to-Asp phosphorelay signal transduction system. Phosphorylation of the Asp residue in the receiver domain activates the ability of the protein to promote the transcription of target genes. Type-A response regulators seem to act as negative regulators of the cytokinin signaling. The polypeptide is Two-component response regulator ORR9 (Oryza sativa subsp. japonica (Rice)).